Here is a 525-residue protein sequence, read N- to C-terminus: Phosphoenolpyruvate carboxykinase (ATP) (525 aa).

Residues arginine 52, tyrosine 186, and lysine 192 each contribute to the substrate site. ATP contacts are provided by residues lysine 192, histidine 211, and 228–236 (GLSGTGKTT). Positions 192 and 211 each coordinate Mn(2+). Aspartate 249 contacts Mn(2+). Residues glutamate 277, arginine 314, 433–434 (RI), and threonine 439 contribute to the ATP site. Arginine 314 is a substrate binding site.

Belongs to the phosphoenolpyruvate carboxykinase (ATP) family. Requires Mn(2+) as cofactor.

Its subcellular location is the cytoplasm. It carries out the reaction oxaloacetate + ATP = phosphoenolpyruvate + ADP + CO2. Its pathway is carbohydrate biosynthesis; gluconeogenesis. Involved in the gluconeogenesis. Catalyzes the conversion of oxaloacetate (OAA) to phosphoenolpyruvate (PEP) through direct phosphoryl transfer between the nucleoside triphosphate and OAA. In Fusobacterium nucleatum subsp. nucleatum (strain ATCC 25586 / DSM 15643 / BCRC 10681 / CIP 101130 / JCM 8532 / KCTC 2640 / LMG 13131 / VPI 4355), this protein is Phosphoenolpyruvate carboxykinase (ATP).